A 1122-amino-acid chain; its full sequence is Protein phosphatase 1 regulatory subunit 3A (1122 aa).

The disordered stretch occupies residues 32–58 (TFQPGFSPQPSRRGSDSSEDIYLDTPS). Phosphoserine; by GSK3 occurs at positions 38 and 42. S46 carries the phosphoserine; by PKA and ISPK modification. A Phosphoserine modification is found at S49. Position 56 is a phosphothreonine (T56). The PP1-binding motif motif lies at 62–65 (RRVS). S65 bears the Phosphoserine; by PKA mark. The 109-residue stretch at 122–230 (QLQIQKAILE…NNNGTNYTFI (109 aa)) folds into the CBM21 domain. Disordered regions lie at residues 332 to 351 (STASRDERNTFSTDPVNFPN), 395 to 422 (SSGDDCTHQPSEETTSNMGEIKPSLGDT), 496 to 516 (CLKESTEEGSSKEDYYGNGKD), and 640 to 668 (GINSEDQDNSPQHKQSWNVLESQGKSREN). Composition is skewed to basic and acidic residues over residues 395-405 (SSGDDCTHQPS) and 499-516 (ESTEEGSSKEDYYGNGKD). The segment covering 640–662 (GINSEDQDNSPQHKQSWNVLESQ) has biased composition (polar residues). Residue S844 is modified to Phosphoserine. Positions 963 to 977 (IEKHPYPESKPEEVS) are enriched in basic and acidic residues. 2 disordered regions span residues 963–983 (IEKHPYPESKPEEVSRSSGIV) and 1025–1058 (RHENEGLVSSGQSLYTSGEKESDSSASTSLPVEE). Composition is skewed to polar residues over residues 1031–1040 (LVSSGQSLYT) and 1048–1058 (SSASTSLPVEE). Residues 1078–1098 (YFLLFLIFLITVYHYDLMIGL) form a helical membrane-spanning segment.

In terms of assembly, interacts with PPP1CC catalytic subunit of PP1, and associates with glycogen. Post-translationally, phosphorylation at Ser-46 by ISPK stimulates the dephosphorylation of glycogen synthase and phosphorylase kinase. Skeletal muscle and heart.

The protein resides in the membrane. In terms of biological role, seems to act as a glycogen-targeting subunit for PP1. PP1 is essential for cell division, and participates in the regulation of glycogen metabolism, muscle contractility and protein synthesis. Plays an important role in glycogen synthesis but is not essential for insulin activation of glycogen synthase. In Homo sapiens (Human), this protein is Protein phosphatase 1 regulatory subunit 3A (PPP1R3A).